The chain runs to 121 residues: MKIVISKPDKNKIRQKRHRRVRGKLSGTADRPRLNVFRSNTGIYAQVIDDVAGVTLASASTLDKDVSKGTKTEQAVVVGKLVAERAVAKGISEVVFDRGGYLYHGRVKALADAARENGLKF.

A disordered region spans residues 1–25 (MKIVISKPDKNKIRQKRHRRVRGKL). The segment covering 13-23 (IRQKRHRRVRG) has biased composition (basic residues).

The protein belongs to the universal ribosomal protein uL18 family. In terms of assembly, part of the 50S ribosomal subunit; part of the 5S rRNA/L5/L18/L25 subcomplex. Contacts the 5S and 23S rRNAs.

Its function is as follows. This is one of the proteins that bind and probably mediate the attachment of the 5S RNA into the large ribosomal subunit, where it forms part of the central protuberance. This is Large ribosomal subunit protein uL18 from Streptococcus pyogenes serotype M28 (strain MGAS6180).